Consider the following 36-residue polypeptide: Pancreatic polypeptide (36 aa).

Tyrosine 36 is subject to Tyrosine amide.

The protein belongs to the NPY family.

The protein localises to the secreted. Hormone secreted by pancreatic cells that acts as a regulator of pancreatic and gastrointestinal functions probably by signaling through the G protein-coupled receptor NPY4R2. The sequence is that of Pancreatic polypeptide (PPY) from Oryctolagus cuniculus (Rabbit).